The sequence spans 140 residues: Holo-[acyl-carrier-protein] synthase (140 aa).

Mg(2+) contacts are provided by D8 and E62.

Belongs to the P-Pant transferase superfamily. AcpS family. Mg(2+) is required as a cofactor.

The protein resides in the cytoplasm. The catalysed reaction is apo-[ACP] + CoA = holo-[ACP] + adenosine 3',5'-bisphosphate + H(+). Its function is as follows. Transfers the 4'-phosphopantetheine moiety from coenzyme A to a Ser of acyl-carrier-protein. The sequence is that of Holo-[acyl-carrier-protein] synthase from Cupriavidus necator (strain ATCC 17699 / DSM 428 / KCTC 22496 / NCIMB 10442 / H16 / Stanier 337) (Ralstonia eutropha).